A 32-amino-acid polypeptide reads, in one-letter code: Ranatuerin-2La (32 aa).

The cysteines at positions 27 and 32 are disulfide-linked.

As to expression, expressed by the skin glands.

It is found in the secreted. Its function is as follows. Antibacterial activity against Gram-positive bacterium S.aureus and Gram-negative bacterium E.coli. Weak activity against C.albicans. The sequence is that of Ranatuerin-2La from Rana luteiventris (Columbia spotted frog).